We begin with the raw amino-acid sequence, 707 residues long: MFFSQPTHLAKAEELKQAPPKGVAYSVALPGTEQPGRSPVYRAWNAQKELLTTLDPEVTTAHDIFESTAIRHPKNDCLGWRPYNSTTKSFDPYQWLTYETVQKRRAAFGAGIVELHHKHDCHRPGQYGVGLWSQNRPEWQITDLACVSQSLYSVSIYDVLSEDATEYIINHSELSCVVTSLPHIASLIKLKPSLPTLKIIISLDPLDGGEQAGHSKRAIFESMAAGLGLAIYTIDQVEELGLASKRGYNPPSASDIVTINYTSGTTGPPKGVVLTHGNAVAATSCGLITISQARGDTSASYLPLAHIYARLAEHTAFWGAARIGYFHGNIAELVDDLKLLKPTGFMSVPRLYSRFGSAIRAATVEQPGFKGALSRHIIAAKTANMKNPDPSKATVRHALYDRIWAKKVTAALGLERARYMVSGSAPLDPTLHNFLRVATGTDVLQGYGLTESYASATAQPVYDLTAGNCGSLAPCVEACLVSLPDMEYSVDDKPFPRGELLLRGNNMFREYYKNEEETRSAITEDGWFRTGDVCTIDEKGRFIIIDRRKNVLKLAQGEYISPERLEGVVLSELGYIAQAYVHGDSLQTFLVGIFGVAPDLFAPYASKVLGRTIAPTDLEAVKESLNDDKVRRAVLRDLERVAKKHKFAGYERIRNVSLKVEPFTVENNLLTPTLKLKRPPTVKVYRSLLDQLYEQAVEEQSAPKAKL.

An ATP-binding site is contributed by 259-270 (INYTSGTTGPPK). Residues 525–549 (DGWFRTGDVCTIDEKGRFIIIDRRK) are fatty acid-binding. The Peroxisome targeting signal signature appears at 705 to 707 (AKL).

The protein belongs to the ATP-dependent AMP-binding enzyme family.

The protein resides in the peroxisome matrix. It catalyses the reaction (4E,8E)-10-(4-hydroxy-6-methoxy-7-methyl-3-oxo-1,3-dihydro-2-benzofuran-5-yl)-4,8-dimethyldeca-4,8-dienoate + ATP + CoA = (4E,8E)-10-(4-hydroxy-6-methoxy-7-methyl-3-oxo-1,3-dihydro-2-benzofuran-5-yl)-4,8-dimethyldeca-4,8-dienoyl-CoA + AMP + diphosphate. It participates in secondary metabolite biosynthesis; terpenoid biosynthesis. Its function is as follows. Acyl-CoA ligase involved in the biosynthesis of mycophenolic acid (MPA), the first isolated antibiotic natural product in the world obtained from a culture of Penicillium brevicompactum in 1893. The peroxisomal acyl-CoA ligase 891 converts the intermediate MFDHMP-3C into MFDHMP-3C-CoA which impairs its diffusion from the peroxisome. The first step of the pathway is the synthesis of 5-methylorsellinic acid (5MOA) by the cytosolic polyketide synthase mpaC. 5MOA is then converted to the phthalide compound 5,7-dihydroxy-4,6-dimethylphthalide (DHMP) by the endoplasmic reticulum-bound cytochrome P450 monooxygenase mpaDE. MpaDE first catalyzes hydroxylation of 5-MOA to 4,6-dihydroxy-2-(hydroxymethyl)-3-methylbenzoic acid (DHMB). MpaDE then acts as a lactone synthase that catalyzes the ring closure to convert DHMB into DHMP. The next step is the prenylation of DHMP by the Golgi apparatus-associated prenyltransferase mpaA to yield farnesyl-DHMP (FDHMP). The ER-bound oxygenase mpaB then mediates the oxidative cleavage the C19-C20 double bond in FDHMP to yield FDHMP-3C via a mycophenolic aldehyde intermediate. The O-methyltransferase mpaG catalyzes the methylation of FDHMP-3C to yield MFDHMP-3C. After the cytosolic methylation of FDHMP-3C, MFDHMP-3C enters into peroxisomes probably via free diffusion due to its low molecular weight. Upon a peroxisomal CoA ligation reaction, catalyzed by a beta-oxidation component enzyme acyl-CoA ligase ACL891, MFDHMP-3C-CoA would then be restricted to peroxisomes for the following beta-oxidation pathway steps. The peroxisomal beta-oxidation machinery than converts MFDHMP-3C-CoA into MPA_CoA, via a beta-oxidation chain-shortening process. Finally mpaH acts as a peroxisomal acyl-CoA hydrolase with high substrate specificity toward MPA-CoA to release the final product MPA. The chain is Acyl-CoA ligase 891, peroxisomal from Penicillium roqueforti (strain FM164).